A 59-amino-acid polypeptide reads, in one-letter code: Large ribosomal subunit protein bL32 (59 aa).

Belongs to the bacterial ribosomal protein bL32 family. Part of the 50S ribosomal subunit.

The polypeptide is Large ribosomal subunit protein bL32 (rpmF) (Bacillus subtilis (strain 168)).